We begin with the raw amino-acid sequence, 433 residues long: tRNA(Ile)-lysidine synthase (433 aa).

Residue 37-42 (SGGKDS) coordinates ATP.

It belongs to the tRNA(Ile)-lysidine synthase family.

The protein resides in the cytoplasm. The enzyme catalyses cytidine(34) in tRNA(Ile2) + L-lysine + ATP = lysidine(34) in tRNA(Ile2) + AMP + diphosphate + H(+). Its function is as follows. Ligates lysine onto the cytidine present at position 34 of the AUA codon-specific tRNA(Ile) that contains the anticodon CAU, in an ATP-dependent manner. Cytidine is converted to lysidine, thus changing the amino acid specificity of the tRNA from methionine to isoleucine. The protein is tRNA(Ile)-lysidine synthase of Leptospira interrogans serogroup Icterohaemorrhagiae serovar Lai (strain 56601).